The chain runs to 129 residues: Large ribosomal subunit protein bL12 (129 aa).

Residues 94–113 (TEGLPKTVKEKTSKSDAEDT) are disordered.

It belongs to the bacterial ribosomal protein bL12 family. Homodimer. Part of the ribosomal stalk of the 50S ribosomal subunit. Forms a multimeric L10(L12)X complex, where L10 forms an elongated spine to which 2 to 4 L12 dimers bind in a sequential fashion. Binds GTP-bound translation factors.

Functionally, forms part of the ribosomal stalk which helps the ribosome interact with GTP-bound translation factors. Is thus essential for accurate translation. This is Large ribosomal subunit protein bL12 from Chlamydia pneumoniae (Chlamydophila pneumoniae).